A 240-amino-acid chain; its full sequence is Adapter protein MecA (240 aa).

Positions 118 to 138 (EQRAQQQKHSHKSEQKQTKQR) are disordered.

It belongs to the MecA family. Homodimer.

Functionally, enables the recognition and targeting of unfolded and aggregated proteins to the ClpC protease or to other proteins involved in proteolysis. The chain is Adapter protein MecA from Staphylococcus haemolyticus (strain JCSC1435).